The chain runs to 151 residues: Flagellar assembly factor FliW 2 (151 aa).

The protein belongs to the FliW family. As to quaternary structure, interacts with translational regulator CsrA and flagellin(s).

It localises to the cytoplasm. In terms of biological role, acts as an anti-CsrA protein, binds CsrA and prevents it from repressing translation of its target genes, one of which is flagellin. Binds to flagellin and participates in the assembly of the flagellum. This is Flagellar assembly factor FliW 2 from Desulfotalea psychrophila (strain LSv54 / DSM 12343).